We begin with the raw amino-acid sequence, 766 residues long: NADH-dependent flavin oxidoreductase iliE (766 aa).

A compositionally biased stretch (polar residues) spans M1 to S13. Residues M1 to P24 are disordered. Residues S14 to P24 are compositionally biased toward basic and acidic residues. N30 carries an N-linked (GlcNAc...) asparagine glycan. Residue A61–A64 coordinates FMN. N-linked (GlcNAc...) asparagine glycans are attached at residues N70 and N136. An FMN-binding site is contributed by Q143. Position 224–227 (H224–H227) interacts with substrate. A385 to R386 is a binding site for FMN. A J domain is found at T551–G622. N634, N650, and N654 each carry an N-linked (GlcNAc...) asparagine glycan. Residues M675–F695 traverse the membrane as a helical segment.

This sequence belongs to the NADH:flavin oxidoreductase/NADH oxidase family.

It is found in the membrane. Functionally, NADH-dependent flavin oxidoreductase; part of the gene cluster that mediates the biosynthesis of ilicicolin H, a 4-hydroxy-2-pyridonealkaloid that has potent and broad antifungal activities by inhibiting the mitochondrial respiration chain. The biosynthesis of ilicicolin H starts with formation of the tetramic acid by the hybrid PKS-NRPS synthetase iliA with the partnering trans-enoyl reductase iliB since iliA lacks a designated enoylreductase (ER) domain. The cytochrome P450 monooxygenase iliC then catalyzes the ring expansion of the tetramate to the acyclic 2-pyridone. The pericyclase iliD further converts the acyclic 2-pyridone into 8-epi-ilicicolin H. 8-epi-ilicicolin H might then spontaneously convert to ilicicolin H since ilicicolin H is produced in the absence of the epimerase iliE, in contrast to what was observed for the Talaromyces variabilis ilicolin H biosynthetic pathway. This Neonectria sp. (strain DH2) protein is NADH-dependent flavin oxidoreductase iliE.